The sequence spans 71 residues: Small ribosomal subunit protein eS17 (71 aa).

This sequence belongs to the eukaryotic ribosomal protein eS17 family.

The sequence is that of Small ribosomal subunit protein eS17 from Pyrobaculum neutrophilum (strain DSM 2338 / JCM 9278 / NBRC 100436 / V24Sta) (Thermoproteus neutrophilus).